Reading from the N-terminus, the 154-residue chain is Lipoprotein signal peptidase (154 aa).

The next 3 helical transmembrane spans lie at 4-24 (IIIPIITILLIALDQLSKLWI), 62-82 (LFTLITIFVVGVAIIYLMKHI), and 84-104 (GSYWLLISLTLIISGGLGNFI). Active-site residues include Asp-114 and Asp-130. A helical transmembrane segment spans residues 125 to 145 (IFNVADSYLTIGIICLMIALW).

The protein belongs to the peptidase A8 family.

Its subcellular location is the cell membrane. It catalyses the reaction Release of signal peptides from bacterial membrane prolipoproteins. Hydrolyzes -Xaa-Yaa-Zaa-|-(S,diacylglyceryl)Cys-, in which Xaa is hydrophobic (preferably Leu), and Yaa (Ala or Ser) and Zaa (Gly or Ala) have small, neutral side chains.. It functions in the pathway protein modification; lipoprotein biosynthesis (signal peptide cleavage). This protein specifically catalyzes the removal of signal peptides from prolipoproteins. The protein is Lipoprotein signal peptidase of Streptococcus agalactiae serotype V (strain ATCC BAA-611 / 2603 V/R).